The sequence spans 258 residues: Phosphatidylglycerol--prolipoprotein diacylglyceryl transferase (258 aa).

A run of 7 helical transmembrane segments spans residues 9–29, 53–73, 90–110, 117–139, 169–189, 198–218, and 230–250; these read ILIQ…ATGF, LLTY…TLIY, EGGL…WLFV, KFLW…IRLG, PVQL…LMLF, GFLF…IEYF, and LISV…VLML. Arginine 137 is a binding site for a 1,2-diacyl-sn-glycero-3-phospho-(1'-sn-glycerol).

It belongs to the Lgt family.

Its subcellular location is the cell inner membrane. It carries out the reaction L-cysteinyl-[prolipoprotein] + a 1,2-diacyl-sn-glycero-3-phospho-(1'-sn-glycerol) = an S-1,2-diacyl-sn-glyceryl-L-cysteinyl-[prolipoprotein] + sn-glycerol 1-phosphate + H(+). The protein operates within protein modification; lipoprotein biosynthesis (diacylglyceryl transfer). Its function is as follows. Catalyzes the transfer of the diacylglyceryl group from phosphatidylglycerol to the sulfhydryl group of the N-terminal cysteine of a prolipoprotein, the first step in the formation of mature lipoproteins. The sequence is that of Phosphatidylglycerol--prolipoprotein diacylglyceryl transferase from Tolumonas auensis (strain DSM 9187 / NBRC 110442 / TA 4).